The sequence spans 245 residues: RAD51-like protein 1 (245 aa).

Interacts with brc-2 and rad-51.

It is found in the nucleus. Has a role in the homologous recombination repair (HRR) of genomic DNA during meiosis. Required for rad-51 recruitment onto ssDNA gaps generated at stalled replication fork barriers. In Caenorhabditis elegans, this protein is RAD51-like protein 1 (rfs-1).